Reading from the N-terminus, the 317-residue chain is L-lactate dehydrogenase (317 aa).

NAD(+) is bound by residues valine 17, aspartate 38, lysine 43, tyrosine 69, and glycine 83–alanine 84. Substrate-binding residues include glutamine 86 and arginine 92. Residues serine 105, alanine 122–asparagine 124, and serine 147 each bind NAD(+). Asparagine 124–aspartate 127 contacts substrate. Aspartate 152–arginine 155 lines the substrate pocket. Residues arginine 157 and histidine 172 each contribute to the beta-D-fructose 1,6-bisphosphate site. Histidine 179 acts as the Proton acceptor in catalysis. A Phosphotyrosine modification is found at tyrosine 224. Substrate is bound at residue threonine 233.

Belongs to the LDH/MDH superfamily. LDH family. Homotetramer.

Its subcellular location is the cytoplasm. The enzyme catalyses (S)-lactate + NAD(+) = pyruvate + NADH + H(+). The protein operates within fermentation; pyruvate fermentation to lactate; (S)-lactate from pyruvate: step 1/1. Its activity is regulated as follows. Allosterically activated by fructose 1,6-bisphosphate (FBP). Functionally, catalyzes the conversion of lactate to pyruvate. This is L-lactate dehydrogenase from Geobacillus thermodenitrificans (strain NG80-2).